Here is a 351-residue protein sequence, read N- to C-terminus: Molybdate-binding protein MolA (351 aa).

Residues 1-21 form the signal peptide; the sequence is MKLKSLLIACLLSSLSFSALA. The Fe/B12 periplasmic-binding domain maps to 41-322; that stretch reads RAVVLQHQTL…WLAKALYPQR (282 aa). Residues 47 to 48, Tyr217, Arg264, and 300 to 301 each bind molybdate; these read HQ and GY.

It belongs to the bacterial solute-binding protein 8 family. In terms of assembly, the complex is composed of two ATP-binding proteins (MolC), two transmembrane proteins (MolB) and a solute-binding protein (MolA).

The protein localises to the periplasm. The MolBCA complex shows a decrease in affinity in the presence of increasing concentrations of substrate and nucleotide. Functionally, part of the ABC transporter complex MolBCA involved in molybdate import. Functions as a low-affinity molybdate transporter. Binds to both molybdate and tungstate, but not to sulfate or phosphate. The sequence is that of Molybdate-binding protein MolA from Haemophilus influenzae (strain ATCC 51907 / DSM 11121 / KW20 / Rd).